The sequence spans 93 residues: MTKSELIERLCAEQTHLSAKEVEDAVKDILEHMASTLESGDRIEIRGFGSFSLHYREPRVGRNPKTGDKVELEGKYVPHFKPGKELRERVNLG.

The protein belongs to the bacterial histone-like protein family. In terms of assembly, heterodimer of an alpha and a beta chain.

In terms of biological role, this protein is one of the two subunits of integration host factor, a specific DNA-binding protein that functions in genetic recombination as well as in transcriptional and translational control. This Vibrio parahaemolyticus serotype O3:K6 (strain RIMD 2210633) protein is Integration host factor subunit beta.